The chain runs to 119 residues: Large ribosomal subunit protein bL20 (119 aa).

The protein belongs to the bacterial ribosomal protein bL20 family.

Its function is as follows. Binds directly to 23S ribosomal RNA and is necessary for the in vitro assembly process of the 50S ribosomal subunit. It is not involved in the protein synthesizing functions of that subunit. This is Large ribosomal subunit protein bL20 from Bacillus velezensis (strain DSM 23117 / BGSC 10A6 / LMG 26770 / FZB42) (Bacillus amyloliquefaciens subsp. plantarum).